Consider the following 416-residue polypeptide: Bifunctional protein GlmU (416 aa).

A pyrophosphorylase region spans residues 1–229; the sequence is MTNYAIILAA…FNESLGVNDR (229 aa). Residues 8-11, lysine 22, glutamine 72, and 77-78 each bind UDP-N-acetyl-alpha-D-glucosamine; these read LAAG and GT. Residue aspartate 102 coordinates Mg(2+). UDP-N-acetyl-alpha-D-glucosamine contacts are provided by glycine 139, glutamate 154, asparagine 169, and asparagine 227. Asparagine 227 is a binding site for Mg(2+). Residues 230-250 are linker; it reads VALATAETVMRQRITQKHMVN. The N-acetyltransferase stretch occupies residues 251-416; it reads GVTFQNPETV…DSHCTFGSWR (166 aa). UDP-N-acetyl-alpha-D-glucosamine is bound by residues arginine 332 and lysine 350. Histidine 362 serves as the catalytic Proton acceptor. UDP-N-acetyl-alpha-D-glucosamine-binding residues include tyrosine 365 and asparagine 376. Acetyl-CoA contacts are provided by residues alanine 379 and 385–386; that span reads NY.

It in the N-terminal section; belongs to the N-acetylglucosamine-1-phosphate uridyltransferase family. In the C-terminal section; belongs to the transferase hexapeptide repeat family. As to quaternary structure, homotrimer. The cofactor is Mg(2+).

Its subcellular location is the cytoplasm. The enzyme catalyses alpha-D-glucosamine 1-phosphate + acetyl-CoA = N-acetyl-alpha-D-glucosamine 1-phosphate + CoA + H(+). It carries out the reaction N-acetyl-alpha-D-glucosamine 1-phosphate + UTP + H(+) = UDP-N-acetyl-alpha-D-glucosamine + diphosphate. It participates in nucleotide-sugar biosynthesis; UDP-N-acetyl-alpha-D-glucosamine biosynthesis; N-acetyl-alpha-D-glucosamine 1-phosphate from alpha-D-glucosamine 6-phosphate (route II): step 2/2. The protein operates within nucleotide-sugar biosynthesis; UDP-N-acetyl-alpha-D-glucosamine biosynthesis; UDP-N-acetyl-alpha-D-glucosamine from N-acetyl-alpha-D-glucosamine 1-phosphate: step 1/1. It functions in the pathway bacterial outer membrane biogenesis; LPS lipid A biosynthesis. Catalyzes the last two sequential reactions in the de novo biosynthetic pathway for UDP-N-acetylglucosamine (UDP-GlcNAc). The C-terminal domain catalyzes the transfer of acetyl group from acetyl coenzyme A to glucosamine-1-phosphate (GlcN-1-P) to produce N-acetylglucosamine-1-phosphate (GlcNAc-1-P), which is converted into UDP-GlcNAc by the transfer of uridine 5-monophosphate (from uridine 5-triphosphate), a reaction catalyzed by the N-terminal domain. The chain is Bifunctional protein GlmU from Streptococcus pyogenes serotype M12 (strain MGAS2096).